The primary structure comprises 783 residues: MAACRYCCSCLRLRPLSDGPFLLPRRDRALTQLQVRALWSSAGSRAVAVDLGNRKLEISSGKLARFADGSAVVQSGDTAVMVTAVSKTKPSPSQFMPLVVDYRQKAAAAGRIPTNYLRREIGTSDKEILTSRIIDRSIRPLFPAGYFYDTQVLCNLLAVDGVNEPDVLAINGASVALSLSDIPWNGPVGAVRIGIIDGEYVVNPTRKEMSSSTLNLVVAGAPKSQIVMLEASAENILQQDFCHAIKVGVKYTQQIIQGIQQLVKETGVTKRTPQKLFTPSPEIVKYTHKLAMERLYAVFTDYEHDKVSRDEAVNKIRLDTEEQLKEKFPEADPYEIIESFNVVAKEVFRSIVLNEYKRCDGRDLTSLRNVSCEVDMFKTLHGSALFQRGQTQVLCTVTFDSLESGIKSDQVITAINGIKDKNFMLHYEFPPYATNEIGKVTGLNRRELGHGALAEKALYPVIPRDFPFTIRVTSEVLESNGSSSMASACGGSLALMDSGVPISSAVAGVAIGLVTKTDPEKGEIEDYRLLTDILGIEDYNGDMDFKIAGTNKGITALQADIKLPGIPIKIVMEAIQQASVAKKEILQIMNKTISKPRASRKENGPVVETVQVPLSKRAKFVGPGGYNLKKLQAETGVTISQVDEETFSVFAPTPSAMHEARDFITEICKDDQEQQLEFGAVYTATITEIRDTGVMVKLYPNMTAVLLHNTQLDQRKIKHPTALGLEVGQEIQVKYFGRDPADGRMRLSRKVLQSPATTVVRTLNDRSSIVMGEPISQSSSNSQ.

The transit peptide at 1 to 45 directs the protein to the mitochondrion; sequence MAACRYCCSCLRLRPLSDGPFLLPRRDRALTQLQVRALWSSAGSR. N6-acetyllysine is present on residues Lys250, Lys264, Lys285, and Lys289. Position 552 is an N6-succinyllysine (Lys552). Residues 605–664 form the KH domain; that stretch reads PVVETVQVPLSKRAKFVGPGGYNLKKLQAETGVTISQVDEETFSVFAPTPSAMHEARDFI. An S1 motif domain is found at 679–750; sequence GAVYTATITE…ADGRMRLSRK (72 aa). Phosphoserine occurs at positions 754 and 782.

This sequence belongs to the polyribonucleotide nucleotidyltransferase family. Homotrimer; in free form. Homooligomer. Component of the mitochondrial degradosome (mtEXO) complex which is a heteropentamer containing 2 copies of SUPV3L1 and 3 copies of PNPT1. As part of the mitochondrial degradosome complex, interacts with GRSF1 in an RNA-dependent manner; the interaction enhances the activity of the complex. Interacts with TCL1A; the interaction has no effect on PNPT1 exonuclease activity.

It localises to the cytoplasm. The protein resides in the mitochondrion matrix. The protein localises to the mitochondrion intermembrane space. It catalyses the reaction RNA(n+1) + phosphate = RNA(n) + a ribonucleoside 5'-diphosphate. RNA-binding protein implicated in numerous RNA metabolic processes. Catalyzes the phosphorolysis of single-stranded polyribonucleotides processively in the 3'-to-5' direction. Mitochondrial intermembrane factor with RNA-processing exoribonulease activity. Component of the mitochondrial degradosome (mtEXO) complex, that degrades 3' overhang double-stranded RNA with a 3'-to-5' directionality in an ATP-dependent manner. Involved in the degradation of non-coding mitochondrial transcripts (MT-ncRNA) and tRNA-like molecules. Required for correct processing and polyadenylation of mitochondrial mRNAs. Plays a role as a cytoplasmic RNA import factor that mediates the translocation of small RNA components, like the 5S RNA, the RNA subunit of ribonuclease P and the mitochondrial RNA-processing (MRP) RNA, into the mitochondrial matrix. Plays a role in mitochondrial morphogenesis and respiration; regulates the expression of the electron transport chain (ETC) components at the mRNA and protein levels. In the cytoplasm, shows a 3'-to-5' exoribonuclease mediating mRNA degradation activity; degrades c-myc mRNA upon treatment with IFNB1/IFN-beta, resulting in a growth arrest in melanoma cells. Regulates the stability of specific mature miRNAs in melanoma cells; specifically and selectively degrades miR-221, preferentially. Also plays a role in RNA cell surveillance by cleaning up oxidized RNAs. Binds to the RNA subunit of ribonuclease P, MRP RNA and miR-221 microRNA. The sequence is that of Polyribonucleotide nucleotidyltransferase 1, mitochondrial from Homo sapiens (Human).